We begin with the raw amino-acid sequence, 325 residues long: Aldo-keto reductase family 1 member A1 (325 aa).

Residue Ala-2 is modified to N-acetylalanine. Phosphoserine is present on Ser-4. NADP(+)-binding positions include 11-20 (GQKMPLIGLG), Thr-21, and Trp-22. Residue Ser-38 is modified to Phosphoserine. Asp-45 contributes to the NADP(+) binding site. The active-site Proton donor is the Tyr-50. Lys-127 carries the post-translational modification N6-acetyllysine; alternate. Lys-127 is modified (N6-succinyllysine; alternate). Lys-145 carries the post-translational modification N6-succinyllysine. Residues Ser-162, Asn-163, Ser-211, Leu-213, Ser-215, Ser-216, Lys-263, Ser-264, Ile-265, Thr-266, Arg-269, Gln-272, and Asn-273 each contribute to the NADP(+) site. Ser-211 carries the post-translational modification Phosphoserine.

This sequence belongs to the aldo/keto reductase family. In terms of assembly, monomer. In terms of tissue distribution, widely expressed. Highly expressed in kidney, salivary gland and liver. Detected in trachea, stomach, brain, lung, prostate, placenta, mammary gland, small intestine and lung.

The protein localises to the cytoplasm. Its subcellular location is the cytosol. It is found in the apical cell membrane. The enzyme catalyses a primary alcohol + NADP(+) = an aldehyde + NADPH + H(+). It catalyses the reaction allyl alcohol + NADP(+) = acrolein + NADPH + H(+). The catalysed reaction is glycerol + NADP(+) = D-glyceraldehyde + NADPH + H(+). It carries out the reaction glycerol + NADP(+) = L-glyceraldehyde + NADPH + H(+). The enzyme catalyses hydroxyacetone + NADP(+) = methylglyoxal + NADPH + H(+). It catalyses the reaction a 4-hydroxynonen-1-ol + NADP(+) = a 4-hydroxynonenal + NADPH + H(+). The catalysed reaction is 3-deoxyfructose + NADP(+) = 3-deoxyglucosone + NADPH + H(+). It carries out the reaction L-gulonate + NADP(+) = aldehydo-D-glucuronate + NADPH + H(+). The enzyme catalyses L-gulono-1,4-lactone + NADP(+) = D-glucurono-3,6-lactone + NADPH + H(+). It catalyses the reaction pyridine 3-methanol + NADP(+) = pyridine-3-carbaldehyde + NADPH + H(+). The catalysed reaction is S-nitroso-CoA + NADPH + H(+) = sulfinamide-CoA + NADP(+). It carries out the reaction S-nitrosoglutathione + NADPH + H(+) = S-(hydroxysulfenamide)glutathione + NADP(+). Functionally, catalyzes the NADPH-dependent reduction of a wide variety of carbonyl-containing compounds to their corresponding alcohols. Displays enzymatic activity towards endogenous metabolites such as aromatic and aliphatic aldehydes, ketones, monosaccharides and bile acids, with a preference for negatively charged substrates, such as glucuronate and succinic semialdehyde. Functions as a detoxifiying enzyme by reducing a range of toxic aldehydes. Reduces methylglyoxal and 3-deoxyglucosone, which are present at elevated levels under hyperglycemic conditions and are cytotoxic. Involved also in the detoxification of lipid-derived aldehydes like acrolein. Plays a role in the activation of procarcinogens, such as polycyclic aromatic hydrocarbon trans-dihydrodiols, and in the metabolism of various xenobiotics and drugs, including the anthracyclines doxorubicin (DOX) and daunorubicin (DAUN). Also acts as an inhibitor of protein S-nitrosylation by mediating degradation of S-nitroso-coenzyme A (S-nitroso-CoA), a cofactor required to S-nitrosylate proteins. S-nitroso-CoA reductase activity is involved in reprogramming intermediary metabolism in renal proximal tubules, notably by inhibiting protein S-nitrosylation of isoform 2 of PKM (PKM2). Also acts as a S-nitroso-glutathione reductase by catalyzing the NADPH-dependent reduction of S-nitrosoglutathione. Displays no reductase activity towards retinoids. This Homo sapiens (Human) protein is Aldo-keto reductase family 1 member A1 (AKR1A1).